A 396-amino-acid polypeptide reads, in one-letter code: S-adenosylmethionine synthase (396 aa).

His-16 is a binding site for ATP. Asp-18 is a Mg(2+) binding site. Glu-44 contributes to the K(+) binding site. The L-methionine site is built by Glu-57 and Gln-100. The flexible loop stretch occupies residues 100-110 (QSPDIAQGVDR). Residues 167–169 (DAK), 232–233 (RF), Asp-241, 247–248 (RK), Ala-264, and Lys-268 contribute to the ATP site. Asp-241 contributes to the L-methionine binding site. Lys-272 contributes to the L-methionine binding site.

Belongs to the AdoMet synthase family. As to quaternary structure, homotetramer; dimer of dimers. Mg(2+) is required as a cofactor. The cofactor is K(+).

It is found in the cytoplasm. It catalyses the reaction L-methionine + ATP + H2O = S-adenosyl-L-methionine + phosphate + diphosphate. Its pathway is amino-acid biosynthesis; S-adenosyl-L-methionine biosynthesis; S-adenosyl-L-methionine from L-methionine: step 1/1. Its function is as follows. Catalyzes the formation of S-adenosylmethionine (AdoMet) from methionine and ATP. The overall synthetic reaction is composed of two sequential steps, AdoMet formation and the subsequent tripolyphosphate hydrolysis which occurs prior to release of AdoMet from the enzyme. The sequence is that of S-adenosylmethionine synthase from Ralstonia pickettii (strain 12J).